A 449-amino-acid chain; its full sequence is Bifunctional protein GlmU (449 aa).

The segment at Met-1–Arg-229 is pyrophosphorylase. UDP-N-acetyl-alpha-D-glucosamine contacts are provided by residues Leu-8–Gly-11, Lys-22, Gln-72, and Gly-77–Thr-78. Position 102 (Asp-102) interacts with Mg(2+). Residues Gly-139, Glu-154, Asn-169, and Asn-227 each coordinate UDP-N-acetyl-alpha-D-glucosamine. Position 227 (Asn-227) interacts with Mg(2+). Residues Val-230–Gln-250 form a linker region. The interval Gly-251 to Arg-449 is N-acetyltransferase. The UDP-N-acetyl-alpha-D-glucosamine site is built by Arg-332 and Lys-350. The active-site Proton acceptor is His-362. Residues Tyr-365 and Asn-376 each contribute to the UDP-N-acetyl-alpha-D-glucosamine site. Acetyl-CoA-binding positions include Asn-385–Tyr-386, Ala-422, and Arg-439.

The protein in the N-terminal section; belongs to the N-acetylglucosamine-1-phosphate uridyltransferase family. In the C-terminal section; belongs to the transferase hexapeptide repeat family. As to quaternary structure, homotrimer. The cofactor is Mg(2+).

Its subcellular location is the cytoplasm. The enzyme catalyses alpha-D-glucosamine 1-phosphate + acetyl-CoA = N-acetyl-alpha-D-glucosamine 1-phosphate + CoA + H(+). It catalyses the reaction N-acetyl-alpha-D-glucosamine 1-phosphate + UTP + H(+) = UDP-N-acetyl-alpha-D-glucosamine + diphosphate. The protein operates within nucleotide-sugar biosynthesis; UDP-N-acetyl-alpha-D-glucosamine biosynthesis; N-acetyl-alpha-D-glucosamine 1-phosphate from alpha-D-glucosamine 6-phosphate (route II): step 2/2. Its pathway is nucleotide-sugar biosynthesis; UDP-N-acetyl-alpha-D-glucosamine biosynthesis; UDP-N-acetyl-alpha-D-glucosamine from N-acetyl-alpha-D-glucosamine 1-phosphate: step 1/1. It functions in the pathway bacterial outer membrane biogenesis; LPS lipid A biosynthesis. Functionally, catalyzes the last two sequential reactions in the de novo biosynthetic pathway for UDP-N-acetylglucosamine (UDP-GlcNAc). The C-terminal domain catalyzes the transfer of acetyl group from acetyl coenzyme A to glucosamine-1-phosphate (GlcN-1-P) to produce N-acetylglucosamine-1-phosphate (GlcNAc-1-P), which is converted into UDP-GlcNAc by the transfer of uridine 5-monophosphate (from uridine 5-triphosphate), a reaction catalyzed by the N-terminal domain. The polypeptide is Bifunctional protein GlmU (Exiguobacterium sibiricum (strain DSM 17290 / CCUG 55495 / CIP 109462 / JCM 13490 / 255-15)).